The chain runs to 100 residues: Large ribosomal subunit protein uL23 (100 aa).

Belongs to the universal ribosomal protein uL23 family. In terms of assembly, part of the 50S ribosomal subunit. Contacts protein L29, and trigger factor when it is bound to the ribosome.

In terms of biological role, one of the early assembly proteins it binds 23S rRNA. One of the proteins that surrounds the polypeptide exit tunnel on the outside of the ribosome. Forms the main docking site for trigger factor binding to the ribosome. This chain is Large ribosomal subunit protein uL23, found in Vibrio vulnificus (strain CMCP6).